The chain runs to 232 residues: Flavin-dependent thymidylate synthase (232 aa).

A ThyX domain is found at 1-204 (MKIALLQHTP…PTIFRDAGPG (204 aa)). FAD contacts are provided by residues S55, 79–81 (RHR), and Q87. DUMP-binding positions include 76-79 (QLVR), 87-91 (QQSQR), and R143. Residues 79-89 (RHRIASYSQQS) carry the ThyX motif motif. FAD contacts are provided by residues 159–161 (NAR) and H165. A dUMP-binding site is contributed by R170. R170 functions as the Involved in ionization of N3 of dUMP, leading to its activation in the catalytic mechanism.

The protein belongs to the thymidylate synthase ThyX family. As to quaternary structure, homotetramer. FAD is required as a cofactor.

The catalysed reaction is dUMP + (6R)-5,10-methylene-5,6,7,8-tetrahydrofolate + NADPH + H(+) = dTMP + (6S)-5,6,7,8-tetrahydrofolate + NADP(+). Its pathway is pyrimidine metabolism; dTTP biosynthesis. In terms of biological role, catalyzes the reductive methylation of 2'-deoxyuridine-5'-monophosphate (dUMP) to 2'-deoxythymidine-5'-monophosphate (dTMP) while utilizing 5,10-methylenetetrahydrofolate (mTHF) as the methyl donor, and NADPH and FADH(2) as the reductant. This chain is Flavin-dependent thymidylate synthase, found in Geobacter sulfurreducens (strain ATCC 51573 / DSM 12127 / PCA).